The primary structure comprises 329 residues: Biotin synthase (329 aa).

The Radical SAM core domain occupies 48–278 (FVGDKVFLCS…TKRISICGGR (231 aa)). Positions 66, 70, and 73 each coordinate [4Fe-4S] cluster. 2 residues coordinate [2Fe-2S] cluster: S143 and C203.

This sequence belongs to the radical SAM superfamily. Biotin synthase family. In terms of assembly, homodimer. The cofactor is [4Fe-4S] cluster. Requires [2Fe-2S] cluster as cofactor.

It catalyses the reaction (4R,5S)-dethiobiotin + (sulfur carrier)-SH + 2 reduced [2Fe-2S]-[ferredoxin] + 2 S-adenosyl-L-methionine = (sulfur carrier)-H + biotin + 2 5'-deoxyadenosine + 2 L-methionine + 2 oxidized [2Fe-2S]-[ferredoxin]. It functions in the pathway cofactor biosynthesis; biotin biosynthesis; biotin from 7,8-diaminononanoate: step 2/2. Its function is as follows. Catalyzes the conversion of dethiobiotin (DTB) to biotin by the insertion of a sulfur atom into dethiobiotin via a radical-based mechanism. In Geotalea daltonii (strain DSM 22248 / JCM 15807 / FRC-32) (Geobacter daltonii), this protein is Biotin synthase.